The chain runs to 468 residues: POC1 centriolar protein homolog B (468 aa).

WD repeat units follow at residues 16–55 (GHKDAVTCVDFSPDSKQLASSSADACVMIWNFKPQSRAYK), 58–97 (GHKEAVTCVQFSPSGHLVASSSKDRTVRLWAPNIKGESTV), 100–139 (AHTAVVRCVNFSSDGQTFITASDDKSIKAWNLHRQRFLFS), 142–181 (QHTNWVRCARFSPDGRLIASCSDDKTVRIWDLTNRLCINT), 184–223 (DYKGHSNYVDFNQMGTCVASAGADSTVKVWDIRMNKLLQH), 226–265 (VHNAGVSSLSFHPSGNYLLTASSDGTLKILDLLEGRLIYT), and 268–307 (GHQGPVLSVTFSKSGDQFASGATDAQVLVWKTNFDKYSVK). Residues 420-459 (NTLEQIVDQLNVLTQTVSILEHRLTLTEDKLKECLENQQK) are a coiled coil.

This sequence belongs to the WD repeat POC1 family. Interacts with pat. As to expression, highly expressed in ovary and, at low levels, in testis.

It localises to the cytoplasm. Its subcellular location is the cytoskeleton. The protein localises to the microtubule organizing center. It is found in the centrosome. The protein resides in the centriole. Its function is as follows. Plays an important role in centriole assembly and/or stability and ciliogenesis. Involved in early steps of centriole duplication, as well as in the later steps of centriole length control. This chain is POC1 centriolar protein homolog B (poc1b), found in Xenopus laevis (African clawed frog).